We begin with the raw amino-acid sequence, 155 residues long: Fibroblast growth factor 1 (155 aa).

A propeptide spanning residues 1-15 (MAEGEITTFTALTER) is cleaved from the precursor. Residue Asn33 coordinates heparin. The interval 127–143 (KKNGNSKLGPRTHYGQK) is heparin-binding.

Belongs to the heparin-binding growth factors family.

The protein localises to the secreted. The protein resides in the cytoplasm. It is found in the cell cortex. It localises to the cytosol. Its subcellular location is the nucleus. Plays an important role in the regulation of cell survival, cell division, angiogenesis, cell differentiation and cell migration. Functions as a potent mitogen in vitro. Acts as a ligand for FGFR1 and integrins. Binds to FGFR1 in the presence of heparin leading to FGFR1 dimerization and activation via sequential autophosphorylation on tyrosine residues which act as docking sites for interacting proteins, leading to the activation of several signaling cascades. Binds to integrins. Its binding to integrins and subsequent ternary complex formation with integrins and FGFR1 are essential for FGF1 signaling. The polypeptide is Fibroblast growth factor 1 (FGF1) (Gallus gallus (Chicken)).